Reading from the N-terminus, the 81-residue chain is Small ribosomal subunit protein bS16 (81 aa).

Belongs to the bacterial ribosomal protein bS16 family.

This chain is Small ribosomal subunit protein bS16, found in Treponema denticola (strain ATCC 35405 / DSM 14222 / CIP 103919 / JCM 8153 / KCTC 15104).